Here is a 181-residue protein sequence, read N- to C-terminus: Ribonuclease HII (181 aa).

The RNase H type-2 domain occupies 1 to 181 (MICGIDEVGR…SLHRKNFKLI (181 aa)). A divalent metal cation is bound by residues aspartate 6, glutamate 7, and aspartate 98.

The protein belongs to the RNase HII family. Mn(2+) is required as a cofactor. The cofactor is Mg(2+).

It localises to the cytoplasm. The enzyme catalyses Endonucleolytic cleavage to 5'-phosphomonoester.. Endonuclease that specifically degrades the RNA of RNA-DNA hybrids. The polypeptide is Ribonuclease HII (Borreliella afzelii (strain PKo) (Borrelia afzelii)).